A 23-amino-acid polypeptide reads, in one-letter code: Basic phospholipase A2 Smb-N6 (23 aa).

It belongs to the phospholipase A2 family. Group II subfamily. Ca(2+) serves as cofactor. Post-translationally, contains 7 disulfide bonds. In terms of tissue distribution, expressed by the venom gland.

It is found in the secreted. The catalysed reaction is a 1,2-diacyl-sn-glycero-3-phosphocholine + H2O = a 1-acyl-sn-glycero-3-phosphocholine + a fatty acid + H(+). In terms of biological role, snake venom phospholipase A2 (PLA2) that shows myotoxic activities. PLA2 catalyzes the calcium-dependent hydrolysis of the 2-acyl groups in 3-sn-phosphoglycerides. This is Basic phospholipase A2 Smb-N6 from Sistrurus miliarius barbouri (Dusky pigmy rattlesnake).